We begin with the raw amino-acid sequence, 102 residues long: Large ribosomal subunit protein bL21 (102 aa).

The protein belongs to the bacterial ribosomal protein bL21 family. Part of the 50S ribosomal subunit. Contacts protein L20.

In terms of biological role, this protein binds to 23S rRNA in the presence of protein L20. The chain is Large ribosomal subunit protein bL21 from Saccharopolyspora erythraea (strain ATCC 11635 / DSM 40517 / JCM 4748 / NBRC 13426 / NCIMB 8594 / NRRL 2338).